Consider the following 615-residue polypeptide: Sodium-dependent neutral amino acid transporter B(0)AT3 (615 aa).

Residues 1–26 are Cytoplasmic-facing; it reads MAQASGMDPLVDIEDERPKWDNKLQY. Residues 27-47 form a helical membrane-spanning segment; the sequence is LLSCIGFAVGLGNIWRFPYLC. The Extracellular segment spans residues 48–52; it reads HTHGG. The chain crosses the membrane as a helical span at residues 53-73; the sequence is GAFLIPYFIALVFEGIPLFYI. At 74–105 the chain is on the cytoplasmic side; that stretch reads ELAIGQRLRRGSIGVWKTISPYLGGVGLGCFS. Residues 106 to 126 form a helical membrane-spanning segment; the sequence is VSFLVSLYYNTILLWVLWFFL. Over 127 to 177 the chain is Extracellular; it reads NSFQHPLPWSTCPLDLNRTGFVQECQSSGTVSYFWYRQTLNITSDISNTGT. 2 N-linked (GlcNAc...) asparagine glycosylation sites follow: Asn143 and Asn167. The chain crosses the membrane as a helical span at residues 178–198; sequence IQWKLFLCLVACWTTVYLCVI. Topologically, residues 199 to 206 are cytoplasmic; the sequence is RGIESTGK. Residues 207–227 traverse the membrane as a helical segment; it reads VIYFTALFPYLVLTIFLIRGL. Topologically, residues 228-255 are extracellular; sequence TLPGATEGLTYLFTPNMKILQNSRVWLD. The helical transmembrane segment at 256-276 threads the bilayer; the sequence is AATQIFFSLSLAFGGHIAFAS. The Cytoplasmic segment spans residues 277 to 290; that stretch reads YNQPRNNCEKDAVT. A helical transmembrane segment spans residues 291-311; sequence IALVNSMTSLYASITIFSIMG. Over 312-397 the chain is Extracellular; sequence FKASNDYGRC…FTEAVLHMPG (86 aa). Asn353 carries N-linked (GlcNAc...) asparagine glycosylation. The chain crosses the membrane as a helical span at residues 398–418; it reads ASVWSVLFFGMLFTLGLSSMF. Residues 419–442 are Cytoplasmic-facing; sequence GNMEGVITPLFDMGILPKGVPKET. A helical transmembrane segment spans residues 443–463; sequence MTGVVCFICFLSAICFTLQSG. Over 464-472 the chain is Extracellular; the sequence is SYWLEIFDS. A helical transmembrane segment spans residues 473–493; the sequence is FAASLNLIIFAFMEVVGVIHV. The Cytoplasmic portion of the chain corresponds to 494–520; that stretch reads YGIKRFCDDIEWMTGRRPSLYWQVTWR. The helical transmembrane segment at 521–541 threads the bilayer; sequence VVSPMLLFGIFLSYIVLLAQS. The Extracellular portion of the chain corresponds to 542-571; it reads SPSYKAWNPQYEHFPSREEKLYPGWVQVTC. A helical membrane pass occupies residues 572 to 592; sequence VLLSFLPSLWVPGIALAQLLF. The Cytoplasmic portion of the chain corresponds to 593–615; the sequence is QYRQRWKNTHLESALKPQESRGC.

The protein belongs to the sodium:neurotransmitter symporter (SNF) (TC 2.A.22) family. SLC6A18 subfamily. Interacts with CLTRN; this interaction regulates the trafficking of SLC6A18 to the cell membrane and its activity. In terms of tissue distribution, kidney-specific expression.

The protein localises to the apical cell membrane. Its subcellular location is the cell membrane. The catalysed reaction is L-alanine(out) + chloride(out) + 2 Na(+)(out) = L-alanine(in) + chloride(in) + 2 Na(+)(in). The enzyme catalyses glycine(out) + chloride(out) + 2 Na(+)(out) = glycine(in) + chloride(in) + 2 Na(+)(in). It carries out the reaction L-methionine(out) + chloride(out) + 2 Na(+)(out) = L-methionine(in) + chloride(in) + 2 Na(+)(in). It catalyses the reaction L-valine(out) + chloride(out) + 2 Na(+)(out) = L-valine(in) + chloride(in) + 2 Na(+)(in). The catalysed reaction is L-isoleucine(out) + chloride(out) + 2 Na(+)(out) = L-isoleucine(in) + chloride(in) + 2 Na(+)(in). The enzyme catalyses L-serine(out) + chloride(out) + 2 Na(+)(out) = L-serine(in) + chloride(in) + 2 Na(+)(in). It carries out the reaction L-leucine(out) + chloride(out) + 2 Na(+)(out) = L-leucine(in) + chloride(in) + 2 Na(+)(in). Its function is as follows. Symporter that transports one amino acid molecule together with two sodium and one chloride ions in kidneys and plays a role in the neutral amino acids reabsorption. Preferentially transports neutral amino acids such as L-glycine and L-alanine but also other neutral amino acids. Required CLTRN for cell surface expression and for its amino acid transporter activity. The transport mechanism is pH-independent. The protein is Sodium-dependent neutral amino acid transporter B(0)AT3 of Rattus norvegicus (Rat).